Reading from the N-terminus, the 287-residue chain is Bifunctional protein FolD (287 aa).

NADP(+)-binding positions include 168–170 (GRS), serine 193, and isoleucine 234.

Belongs to the tetrahydrofolate dehydrogenase/cyclohydrolase family. Homodimer.

The enzyme catalyses (6R)-5,10-methylene-5,6,7,8-tetrahydrofolate + NADP(+) = (6R)-5,10-methenyltetrahydrofolate + NADPH. It carries out the reaction (6R)-5,10-methenyltetrahydrofolate + H2O = (6R)-10-formyltetrahydrofolate + H(+). Its pathway is one-carbon metabolism; tetrahydrofolate interconversion. Functionally, catalyzes the oxidation of 5,10-methylenetetrahydrofolate to 5,10-methenyltetrahydrofolate and then the hydrolysis of 5,10-methenyltetrahydrofolate to 10-formyltetrahydrofolate. The protein is Bifunctional protein FolD of Clostridioides difficile (strain 630) (Peptoclostridium difficile).